The primary structure comprises 122 residues: uncharacterized protein (122 aa).

Helical transmembrane passes span V21–I40, Y57–I77, and L94–Y114.

It is found in the membrane. This is an uncharacterized protein from Saccharomyces cerevisiae (strain ATCC 204508 / S288c) (Baker's yeast).